The chain runs to 537 residues: MSSHSHNGSVGQPLGSGPGFLGWEPVDPEAGRPLQPTQGPGLQMVAKGQPVRLSPGGSRGHPQEQEEEEEEEEEEDKTGSGKPPTVSHRLGHRRALFEKRKRLSDYALIFGMFGIVVMVTETELSWGVYTKESLCSFALKCLISLSTVILLGLVILYHAREIQLFLVDNGADDWRIAMTWERVSLISLELVVCAIHPVPGHYRFTWTARLAFSLVPSAAEADLDVLLSIPMFLRLYLLARVMLLHSRIFTDASSRSIGALNRVTFNTRFVTKTLMTICPGTVLLVFSVSSWIVAAWTVRVCERYHDKQEVTSNFLGAMWLISITFLSIGYGDMVPHTYCGKGVCLLTGIMGAGCTALVVAVVARKLELTKAEKHVHNFMMDTQLTKRVKNAAANVLRETWLIYKHTRLVKKPDQGRVRKHQRKFLQAIHQAQKLRSVKIEQGKVNDQANTLAELAKAQSIAYEVVSELQAQQEELEARLAALESRLDVLGASLQALPGLIAQAICPLPPPWPGPGHLATATHSPQSHWLPTMGSDCG.

The span at Met1–Val10 shows a compositional bias: polar residues. Residues Met1–Leu90 form a disordered region. Acidic residues predominate over residues Gln65–Asp76. Residues Leu108–Val128 form a helical membrane-spanning segment. The chain crosses the membrane as a helical span at residues Phe137–Tyr157. The helical transmembrane segment at Ile176–His196 threads the bilayer. The chain crosses the membrane as a helical span at residues Val225–His245. The helical transmembrane segment at Leu274–Ala294 threads the bilayer. The pore-forming intramembrane region spans Phe314–Val334. The interval Val343 to Ala363 is segment S6. Residues Asp381–Ile460 are calmodulin-binding.

It belongs to the potassium channel KCNN family. KCa2.1/KCNN1 subfamily. In terms of assembly, homodimer. Heteromultimer with KCNN2 and KCNN3. The complex is composed of 4 channel subunits each of which binds to a calmodulin subunit which regulates the channel activity through calcium-binding. Interacts with calmodulin. In terms of tissue distribution, highest expression in brain and liver with lower levels in heart, testis, kidney and colon. In colon, detected in smooth muscle cells. Expressed in atrial and ventricular myocytes with higher levels in atrial myocytes.

The protein resides in the membrane. It is found in the cytoplasm. It localises to the myofibril. Its subcellular location is the sarcomere. The protein localises to the z line. The catalysed reaction is K(+)(in) = K(+)(out). With respect to regulation, inhibited by bee venom neurotoxin apamin. Inhibited by d-tubocurarine and tetraethylammonium (TEA). Small conductance calcium-activated potassium channel that mediates the voltage-independent transmembrane transfer of potassium across the cell membrane through a constitutive interaction with calmodulin which binds the intracellular calcium allowing its opening. The current is characterized by a voltage-independent activation, an intracellular calcium concentration increase-dependent activation and a single-channel conductance of about 3 picosiemens. Also presents an inwardly rectifying current, thus reducing its already small outward conductance of potassium ions, which is particularly the case when the membrane potential displays positive values, above + 20 mV. Activation is followed by membrane hyperpolarization. Thought to regulate neuronal excitability by contributing to the slow component of synaptic afterhyperpolarization. This chain is Small conductance calcium-activated potassium channel protein 1, found in Mus musculus (Mouse).